The following is an 851-amino-acid chain: Molybdenum cofactor sulfurase (851 aa).

Lysine 249 carries the N6-(pyridoxal phosphate)lysine modification. The active site involves cysteine 413. The MOSC domain maps to 665 to 844 (QYLRKFVMPG…LMVGDIVTPS (180 aa)).

It belongs to the class-V pyridoxal-phosphate-dependent aminotransferase family. MOCOS subfamily. Pyridoxal 5'-phosphate serves as cofactor.

It carries out the reaction Mo-molybdopterin + L-cysteine + AH2 = thio-Mo-molybdopterin + L-alanine + A + H2O. The protein operates within cofactor biosynthesis; molybdopterin biosynthesis. In terms of biological role, sulfurates the molybdenum cofactor. Sulfation of molybdenum is essential for xanthine dehydrogenase (XDH) and aldehyde oxidase (ADO) enzymes in which molybdenum cofactor is liganded by 1 oxygen and 1 sulfur atom in active form. This is Molybdenum cofactor sulfurase from Neosartorya fischeri (strain ATCC 1020 / DSM 3700 / CBS 544.65 / FGSC A1164 / JCM 1740 / NRRL 181 / WB 181) (Aspergillus fischerianus).